A 382-amino-acid polypeptide reads, in one-letter code: Lipid-A-disaccharide synthase (382 aa).

This sequence belongs to the LpxB family.

It carries out the reaction 2-N,3-O-bis[(3R)-3-hydroxytetradecanoyl]-alpha-D-glucosaminyl 1-phosphate + UDP-2-N,3-O-bis[(3R)-3-hydroxytetradecanoyl]-alpha-D-glucosamine = lipid A disaccharide (E. coli) + UDP + H(+). The enzyme catalyses a lipid X + a UDP-2-N,3-O-bis[(3R)-3-hydroxyacyl]-alpha-D-glucosamine = a lipid A disaccharide + UDP + H(+). Its pathway is glycolipid biosynthesis; lipid IV(A) biosynthesis; lipid IV(A) from (3R)-3-hydroxytetradecanoyl-[acyl-carrier-protein] and UDP-N-acetyl-alpha-D-glucosamine: step 5/6. Condensation of UDP-2,3-diacylglucosamine and 2,3-diacylglucosamine-1-phosphate to form lipid A disaccharide, a precursor of lipid A, a phosphorylated glycolipid that anchors the lipopolysaccharide to the outer membrane of the cell. The chain is Lipid-A-disaccharide synthase from Citrobacter koseri (strain ATCC BAA-895 / CDC 4225-83 / SGSC4696).